We begin with the raw amino-acid sequence, 160 residues long: uncharacterized protein (160 aa).

Residue tyrosine 49 is modified to Phosphotyrosine.

In terms of biological role, may be involved in the assembly, structure, or function of the flagellum. May polymerize to form a filamentous structure that is part of the flagellum. This is an uncharacterized protein from Bacillus subtilis (strain 168).